The following is a 40-amino-acid chain: Muscarinic m1-toxin3 (40 aa).

A disulfide bridge links Cys-3 with Cys-24.

The protein belongs to the three-finger toxin family. Short-chain subfamily. Aminergic toxin sub-subfamily. As to quaternary structure, monomer. Post-translationally, contains 4 disulfide bonds. As to expression, expressed by the venom gland.

Its subcellular location is the secreted. In terms of biological role, binds irreversibly and specifically to M1 (CHRM1) muscarinic acetylcholine receptors, blocking further binding of antagonists and preventing the action of agonists. In Dendroaspis angusticeps (Eastern green mamba), this protein is Muscarinic m1-toxin3.